The chain runs to 562 residues: Eukaryotic translation initiation factor 3 subunit L (562 aa).

The PCI domain occupies 329-535; it reads DAIRVFANIL…IHIADTKVAR (207 aa).

This sequence belongs to the eIF-3 subunit L family. In terms of assembly, component of the eukaryotic translation initiation factor 3 (eIF-3) complex, which is composed of 13 subunits: eif3a, eif3b, eif3c, eif3d, eif3e, eif3f, eif3g, eif3h, eif3i, eif3j, eif3k, eif3l and eif3m.

The protein localises to the cytoplasm. Component of the eukaryotic translation initiation factor 3 (eIF-3) complex, which is involved in protein synthesis of a specialized repertoire of mRNAs and, together with other initiation factors, stimulates binding of mRNA and methionyl-tRNAi to the 40S ribosome. The eIF-3 complex specifically targets and initiates translation of a subset of mRNAs involved in cell proliferation. The polypeptide is Eukaryotic translation initiation factor 3 subunit L (eif3l) (Xenopus tropicalis (Western clawed frog)).